The following is a 238-amino-acid chain: MLGAELADTGLFVRFGALHFAIASVAVLLSALFVLLPFALPRLLAHKNLARAGVAILFLRLGLMLCGTLLDGRSWRNELPFHLCPAALISGSLYFITRRPIFFNLLYFWHFGSFVAVLYPDLTRAHTILYAYLFMLTHCLEPAMVVFSLLHLRERISKRGLQCAVLGFLLLAANALFWNRRLGANYLFISKYPLEILRVIRPFFVYQLLFVSALCLLMLVLYLPFRPSQHGRNQLFVI.

A run of 7 helical transmembrane segments spans residues 15 to 37, 50 to 69, 79 to 96, 101 to 118, 128 to 150, 163 to 183, and 203 to 225; these read FGAL…VLLP, ARAG…CGTL, LPFH…LYFI, IFFN…VAVL, ILYA…FSLL, CAVL…RRLG, and FFVY…YLPF.

Its subcellular location is the cell membrane. This is an uncharacterized protein from Treponema pallidum (strain Nichols).